Consider the following 104-residue polypeptide: Integration host factor subunit alpha (104 aa).

This sequence belongs to the bacterial histone-like protein family. Heterodimer of an alpha and a beta chain.

This protein is one of the two subunits of integration host factor, a specific DNA-binding protein that functions in genetic recombination as well as in transcriptional and translational control. The sequence is that of Integration host factor subunit alpha from Buchnera aphidicola subsp. Cinara cedri (strain Cc).